The sequence spans 717 residues: Cleavage stimulation factor subunit 3 (717 aa).

N-acetylserine is present on S2. 9 HAT repeats span residues 45–77 (QPID…AEIK), 79–110 (KNYD…YVRE), 117–152 (SYKE…FLKG), 163–196 (QRIT…YEEG), 221–261 (KEYE…WEKS), 271–303 (LITK…YLEQ), 319–352 (LFSD…YEES), 354–387 (MKYE…FARR), and 458–494 (NEDN…FESN). A disordered region spans residues 684-705 (VKRPNEDSDEDEEKGAVVPPVH). S691 carries the phosphoserine modification.

Homodimer. The CSTF complex is composed of CSTF1 (50 kDa subunit), CSTF2 (64 kDa subunit) and CSTF3 (77 kDa subunit). CSTF3 directly interacts with CSTF1 and CSTF2. Interacts with FIP1L1.

The protein resides in the nucleus. Its function is as follows. One of the multiple factors required for polyadenylation and 3'-end cleavage of mammalian pre-mRNAs. The chain is Cleavage stimulation factor subunit 3 (CSTF3) from Homo sapiens (Human).